A 201-amino-acid polypeptide reads, in one-letter code: Large ribosomal subunit protein uL4 (201 aa).

The segment at 45 to 66 is disordered; that stretch reads AQLTRSEVSGGGKKPWRQKGTG.

This sequence belongs to the universal ribosomal protein uL4 family. As to quaternary structure, part of the 50S ribosomal subunit.

Its function is as follows. One of the primary rRNA binding proteins, this protein initially binds near the 5'-end of the 23S rRNA. It is important during the early stages of 50S assembly. It makes multiple contacts with different domains of the 23S rRNA in the assembled 50S subunit and ribosome. Forms part of the polypeptide exit tunnel. This Aeromonas hydrophila subsp. hydrophila (strain ATCC 7966 / DSM 30187 / BCRC 13018 / CCUG 14551 / JCM 1027 / KCTC 2358 / NCIMB 9240 / NCTC 8049) protein is Large ribosomal subunit protein uL4.